The following is a 331-amino-acid chain: Light-harvesting complex I LH35 proteins (331 aa).

The protein localises to the plastid. It is found in the chloroplast. The sequence is that of Light-harvesting complex I LH35 proteins from Euglena gracilis.